Here is a 160-residue protein sequence, read N- to C-terminus: Eukaryotic translation initiation factor 5A-2 (160 aa).

A compositionally biased stretch (basic and acidic residues) spans 1 to 12; that stretch reads MSDEEHHFESKA. Residues 1–21 form a disordered region; sequence MSDEEHHFESKADAGASKTFP. At Lys52 the chain carries Hypusine.

It belongs to the eIF-5A family. Post-translationally, lys-52 undergoes hypusination, a unique post-translational modification that consists in the addition of a butylamino group from spermidine to lysine side chain, leading to the formation of the unusual amino acid hypusine. eIF-5As are the only known proteins to undergo this modification, which is essential for their function.

In terms of biological role, translation factor that promotes translation elongation and termination, particularly upon ribosome stalling at specific amino acid sequence contexts. Binds between the exit (E) and peptidyl (P) site of the ribosome and promotes rescue of stalled ribosome: specifically required for efficient translation of polyproline-containing peptides as well as other motifs that stall the ribosome. Acts as a ribosome quality control (RQC) cofactor by joining the RQC complex to facilitate peptidyl transfer during CAT tailing step. This chain is Eukaryotic translation initiation factor 5A-2, found in Solanum lycopersicum (Tomato).